Consider the following 747-residue polypeptide: Cyclic di-GMP phosphodiesterase PdeF (747 aa).

Residues 1–14 (MKLNATYIKIRDKW) lie on the Periplasmic side of the membrane. A helical transmembrane segment spans residues 15–36 (WGLPLFLPSLILPIFAHINTFA). The Cytoplasmic portion of the chain corresponds to 37 to 42 (HISSGE). A helical membrane pass occupies residues 43 to 65 (VFLFYLPLALMISMMMFFSWAAL). Topologically, residues 66–79 (PGIALGIFVRKYAE) are periplasmic. The helical transmembrane segment at 80 to 102 (LGFYETLSLTANFIIIIILCWGG) threads the bilayer. Residues 103 to 128 (YRVFTPRRNNVSHGDTRLISQRIFWQ) lie on the Cytoplasmic side of the membrane. A helical transmembrane segment spans residues 129 to 151 (IVFPATLFLILFQFAAFVGLLAS). At 152-165 (RENLVGVMPFNLGT) the chain is on the periplasmic side. Residues 166 to 188 (LINYQALLVGNLIGVPLCYFIIR) form a helical membrane-spanning segment. The Cytoplasmic segment spans residues 189-215 (VVRNPFYLRSYYSQLKQQVDAKVTKKE). The chain crosses the membrane as a helical span at residues 216–235 (FALWLLALGALLLLLCMPLN). Topologically, residues 236–239 (EKST) are periplasmic. A helical transmembrane segment spans residues 240-259 (IFSTNYTLSLLLPLMMWGAM). The Cytoplasmic portion of the chain corresponds to 260–265 (RYGYKL). Residues 266–285 (ISLLWAVVLMISIHSYQNYI) form a helical membrane-spanning segment. Topologically, residues 286–294 (PIYPGYTTQ) are periplasmic. The chain crosses the membrane as a helical span at residues 295-317 (LTITSSSYLVFSFIVNYMAVLAT). Residues 318–747 (RQRAVVRRIQ…NEIEPIRESA (430 aa)) are Cytoplasmic-facing. In terms of domain architecture, EAL spans 493–744 (KVAMMNRLQQ…DTLNEIEPIR (252 aa)).

Requires Mg(2+) as cofactor. The cofactor is Mn(2+).

The protein resides in the cell inner membrane. It catalyses the reaction 3',3'-c-di-GMP + H2O = 5'-phosphoguanylyl(3'-&gt;5')guanosine + H(+). With respect to regulation, inhibited by pGpG. In terms of biological role, phosphodiesterase (PDE) that catalyzes the hydrolysis of cyclic-di-GMP (c-di-GMP) to 5'-pGpG. Truncated proteins consisting of the GGDEF/EAL domains (residues 319-747) or of the EAL domain alone (481-747) have c-di-GMP phosphodiesterase activity. They do not have diguanylate cyclase activity. Cyclic-di-GMP is a second messenger which controls cell surface-associated traits in bacteria. The protein is Cyclic di-GMP phosphodiesterase PdeF of Escherichia coli (strain K12).